The following is a 209-amino-acid chain: Uracil phosphoribosyltransferase (209 aa).

5-phospho-alpha-D-ribose 1-diphosphate-binding positions include R79, R104, and 131–139; that span reads DPMLATGNS. Uracil contacts are provided by residues I194 and 199–201; that span reads GDA. Position 200 (D200) interacts with 5-phospho-alpha-D-ribose 1-diphosphate.

The protein belongs to the UPRTase family. Requires Mg(2+) as cofactor.

The catalysed reaction is UMP + diphosphate = 5-phospho-alpha-D-ribose 1-diphosphate + uracil. It participates in pyrimidine metabolism; UMP biosynthesis via salvage pathway; UMP from uracil: step 1/1. Allosterically activated by GTP. In terms of biological role, catalyzes the conversion of uracil and 5-phospho-alpha-D-ribose 1-diphosphate (PRPP) to UMP and diphosphate. This chain is Uracil phosphoribosyltransferase, found in Sinorhizobium fredii (strain NBRC 101917 / NGR234).